The chain runs to 143 residues: Flagellar assembly factor FliW (143 aa).

The protein belongs to the FliW family. As to quaternary structure, interacts with translational regulator CsrA and flagellin(s).

It is found in the cytoplasm. Functionally, acts as an anti-CsrA protein, binds CsrA and prevents it from repressing translation of its target genes, one of which is flagellin. Binds to flagellin and participates in the assembly of the flagellum. This chain is Flagellar assembly factor FliW, found in Clostridium botulinum (strain 657 / Type Ba4).